A 152-amino-acid polypeptide reads, in one-letter code: Xanthine-guanine phosphoribosyltransferase (152 aa).

5-phospho-alpha-D-ribose 1-diphosphate contacts are provided by residues 37-38 (RG), arginine 69, and 88-96 (DDLVDSGDT). Residue arginine 69 coordinates GMP. Aspartate 89 is a binding site for Mg(2+). 2 residues coordinate guanine: aspartate 92 and isoleucine 135. Residues aspartate 92 and isoleucine 135 each contribute to the xanthine site. GMP contacts are provided by residues 92 to 96 (DSGDT) and 134 to 135 (WI).

The protein belongs to the purine/pyrimidine phosphoribosyltransferase family. XGPT subfamily. In terms of assembly, homotetramer. It depends on Mg(2+) as a cofactor.

It is found in the cell inner membrane. The catalysed reaction is GMP + diphosphate = guanine + 5-phospho-alpha-D-ribose 1-diphosphate. It catalyses the reaction XMP + diphosphate = xanthine + 5-phospho-alpha-D-ribose 1-diphosphate. It carries out the reaction IMP + diphosphate = hypoxanthine + 5-phospho-alpha-D-ribose 1-diphosphate. Its pathway is purine metabolism; GMP biosynthesis via salvage pathway; GMP from guanine: step 1/1. It functions in the pathway purine metabolism; XMP biosynthesis via salvage pathway; XMP from xanthine: step 1/1. In terms of biological role, purine salvage pathway enzyme that catalyzes the transfer of the ribosyl-5-phosphate group from 5-phospho-alpha-D-ribose 1-diphosphate (PRPP) to the N9 position of the 6-oxopurines guanine and xanthine to form the corresponding ribonucleotides GMP (guanosine 5'-monophosphate) and XMP (xanthosine 5'-monophosphate), with the release of PPi. To a lesser extent, also acts on hypoxanthine. The polypeptide is Xanthine-guanine phosphoribosyltransferase (Aliivibrio salmonicida (strain LFI1238) (Vibrio salmonicida (strain LFI1238))).